The primary structure comprises 84 residues: CDC42 small effector protein 2-A (84 aa).

Residues Cys10 and Cys11 are each lipidated (S-palmitoyl cysteine). A CRIB domain is found at Ile29–Gly42.

The protein belongs to the CDC42SE/SPEC family.

It localises to the cytoplasm. The protein resides in the cytoskeleton. Its subcellular location is the cell membrane. Functionally, probably involved in the organization of the actin cytoskeleton by acting downstream of CDC42, inducing actin filament assembly. In Xenopus laevis (African clawed frog), this protein is CDC42 small effector protein 2-A (cdc42se2-a).